Reading from the N-terminus, the 418-residue chain is Tyrosine--tRNA ligase (418 aa).

An L-tyrosine-binding site is contributed by Tyr-38. A 'HIGH' region motif is present at residues 43–52 (CTAKSLHVGS). Tyr-175 and Gln-179 together coordinate L-tyrosine. A 'KMSKS' region motif is present at residues 235 to 239 (KMGKT). Residue Lys-238 coordinates ATP. Positions 348–413 (LPIIKLLQMC…CGKKRHLKVM (66 aa)) constitute an S4 RNA-binding domain.

The protein belongs to the class-I aminoacyl-tRNA synthetase family. TyrS type 1 subfamily. As to quaternary structure, homodimer.

The protein localises to the cytoplasm. The catalysed reaction is tRNA(Tyr) + L-tyrosine + ATP = L-tyrosyl-tRNA(Tyr) + AMP + diphosphate + H(+). Catalyzes the attachment of tyrosine to tRNA(Tyr) in a two-step reaction: tyrosine is first activated by ATP to form Tyr-AMP and then transferred to the acceptor end of tRNA(Tyr). The chain is Tyrosine--tRNA ligase from Ehrlichia chaffeensis (strain ATCC CRL-10679 / Arkansas).